The chain runs to 200 residues: Lipopolysaccharide core heptose(II)-phosphate phosphatase (200 aa).

The N-terminal stretch at 1-25 (MLAFCRSSLKSKKYFIILLALAAIA) is a signal peptide.

It belongs to the phosphoglycerate mutase family. Ais subfamily.

It is found in the periplasm. The protein operates within bacterial outer membrane biogenesis; lipopolysaccharide metabolism. Its function is as follows. Catalyzes the dephosphorylation of heptose(II) of the outer membrane lipopolysaccharide core. This Shigella flexneri serotype 5b (strain 8401) protein is Lipopolysaccharide core heptose(II)-phosphate phosphatase.